A 350-amino-acid chain; its full sequence is Holliday junction branch migration complex subunit RuvB (350 aa).

The disordered stretch occupies residues 1-22 (MDHTASLSPVRPEAQPTDDRER). Positions 1–185 (MDHTASLSPV…FGIVERFEFY (185 aa)) are large ATPase domain (RuvB-L). ATP contacts are provided by residues Leu24, Arg25, Gly66, Lys69, Thr70, Thr71, 132–134 (EDY), Arg175, Tyr185, and Arg222. Mg(2+) is bound at residue Thr70. Residues 186–256 (TPEELAAIVQ…IVRAGLAHLK (71 aa)) are small ATPAse domain (RuvB-S). A head domain (RuvB-H) region spans residues 259–350 (ELGLELHDIQ…PHSPEQGTLL (92 aa)). Residues Arg314 and Arg319 each contribute to the DNA site.

This sequence belongs to the RuvB family. As to quaternary structure, homohexamer. Forms an RuvA(8)-RuvB(12)-Holliday junction (HJ) complex. HJ DNA is sandwiched between 2 RuvA tetramers; dsDNA enters through RuvA and exits via RuvB. An RuvB hexamer assembles on each DNA strand where it exits the tetramer. Each RuvB hexamer is contacted by two RuvA subunits (via domain III) on 2 adjacent RuvB subunits; this complex drives branch migration. In the full resolvosome a probable DNA-RuvA(4)-RuvB(12)-RuvC(2) complex forms which resolves the HJ.

The protein resides in the cytoplasm. The catalysed reaction is ATP + H2O = ADP + phosphate + H(+). The RuvA-RuvB-RuvC complex processes Holliday junction (HJ) DNA during genetic recombination and DNA repair, while the RuvA-RuvB complex plays an important role in the rescue of blocked DNA replication forks via replication fork reversal (RFR). RuvA specifically binds to HJ cruciform DNA, conferring on it an open structure. The RuvB hexamer acts as an ATP-dependent pump, pulling dsDNA into and through the RuvAB complex. RuvB forms 2 homohexamers on either side of HJ DNA bound by 1 or 2 RuvA tetramers; 4 subunits per hexamer contact DNA at a time. Coordinated motions by a converter formed by DNA-disengaged RuvB subunits stimulates ATP hydrolysis and nucleotide exchange. Immobilization of the converter enables RuvB to convert the ATP-contained energy into a lever motion, pulling 2 nucleotides of DNA out of the RuvA tetramer per ATP hydrolyzed, thus driving DNA branch migration. The RuvB motors rotate together with the DNA substrate, which together with the progressing nucleotide cycle form the mechanistic basis for DNA recombination by continuous HJ branch migration. Branch migration allows RuvC to scan DNA until it finds its consensus sequence, where it cleaves and resolves cruciform DNA. This Treponema pallidum (strain Nichols) protein is Holliday junction branch migration complex subunit RuvB.